The sequence spans 169 residues: Methane monooxygenase component A gamma chain (169 aa).

In terms of assembly, m.trichosporium has two forms of methane monooxygenase, a soluble and a membrane-bound type. The soluble type consists of four components (A to D): protein A, comprising three chains, in an alpha-2, beta-2, gamma-2 configuration, is a nonheme iron protein containing an unusual mu-hydroxo bridge structure at its active site and interacts with both oxygen and methane.

It carries out the reaction methane + NADH + O2 + H(+) = methanol + NAD(+) + H2O. It catalyses the reaction methane + NADPH + O2 + H(+) = methanol + NADP(+) + H2O. In terms of biological role, responsible for the initial oxygenation of methane to methanol in methanotrophs. It also catalyzes the monohydroxylation of a variety of unactivated alkenes, alicyclic, aromatic and heterocyclic compounds. This Methylosinus trichosporium protein is Methane monooxygenase component A gamma chain (mmoZ).